The sequence spans 300 residues: Auxin-responsive protein IAA7 (300 aa).

Disordered stretches follow at residues 1 to 80 (MGEA…DGDK) and 92 to 125 (VSHS…LASN). Positions 43–47 (LSLGL) match the EAR-like (transcriptional repression) motif. Residues 92–103 (VSHSQGKANKNK) show a composition bias toward polar residues. The PB1 domain maps to 177 to 281 (APFIKINMDG…SVKRLRVLKT (105 aa)).

The protein belongs to the Aux/IAA family. Homodimers and heterodimers. As to expression, expressed at low levels in roots and shoots.

The protein localises to the nucleus. Functionally, aux/IAA proteins are short-lived transcriptional factors that function as repressors of early auxin response genes at low auxin concentrations. The chain is Auxin-responsive protein IAA7 (IAA7) from Oryza sativa subsp. japonica (Rice).